The following is a 554-amino-acid chain: Glutamine--tRNA ligase (554 aa).

A 'HIGH' region motif is present at residues Pro-34 to His-44. ATP contacts are provided by residues Glu-35–Asn-37 and His-41–Ser-47. Asp-67 and Tyr-212 together coordinate L-glutamine. ATP contacts are provided by residues Thr-231, Arg-261 to Leu-262, and Met-269 to Lys-271. The 'KMSKS' region motif lies at Val-268–Arg-272. An interaction with tRNA region spans residues Thr-317–Glu-324.

Belongs to the class-I aminoacyl-tRNA synthetase family. Monomer.

The protein resides in the cytoplasm. The catalysed reaction is tRNA(Gln) + L-glutamine + ATP = L-glutaminyl-tRNA(Gln) + AMP + diphosphate. In Escherichia coli O157:H7, this protein is Glutamine--tRNA ligase.